Consider the following 271-residue polypeptide: Putative carboxymethylenebutenolidase (271 aa).

Active-site residues include Cys-147, Asp-204, and His-236.

This sequence belongs to the dienelactone hydrolase family.

The catalysed reaction is 2-(5-oxo-2,5-dihydrofuran-2-ylidene)acetate + H2O = 4-oxohex-2-enedioate + H(+). The polypeptide is Putative carboxymethylenebutenolidase (ysgA) (Escherichia coli (strain K12)).